The primary structure comprises 199 residues: UPF0637 protein LACR_1918 (199 aa).

The protein belongs to the UPF0637 family.

This is UPF0637 protein LACR_1918 from Lactococcus lactis subsp. cremoris (strain SK11).